Consider the following 214-residue polypeptide: A-type ATP synthase subunit D (214 aa).

This sequence belongs to the V-ATPase D subunit family. In terms of assembly, has multiple subunits with at least A(3), B(3), C, D, E, F, H, I and proteolipid K(x).

It localises to the cell membrane. Component of the A-type ATP synthase that produces ATP from ADP in the presence of a proton gradient across the membrane. This chain is A-type ATP synthase subunit D, found in Methanosphaera stadtmanae (strain ATCC 43021 / DSM 3091 / JCM 11832 / MCB-3).